The following is a 212-amino-acid chain: Bilin biosynthesis protein PecF (212 aa).

The protein belongs to the CpcE/RpcE/PecE family.

Its function is as follows. An enzyme involved in the biosynthesis of bilin. The sequence is that of Bilin biosynthesis protein PecF (pecF) from Mastigocladus laminosus (Fischerella sp.).